Consider the following 306-residue polypeptide: 4-diphosphocytidyl-2-C-methyl-D-erythritol kinase (306 aa).

Residue Lys11 is part of the active site. 113 to 123 contacts ATP; that stretch reads PPEGGIGGGSS. Asp153 is a catalytic residue.

This sequence belongs to the GHMP kinase family. IspE subfamily.

It carries out the reaction 4-CDP-2-C-methyl-D-erythritol + ATP = 4-CDP-2-C-methyl-D-erythritol 2-phosphate + ADP + H(+). It functions in the pathway isoprenoid biosynthesis; isopentenyl diphosphate biosynthesis via DXP pathway; isopentenyl diphosphate from 1-deoxy-D-xylulose 5-phosphate: step 3/6. Its function is as follows. Catalyzes the phosphorylation of the position 2 hydroxy group of 4-diphosphocytidyl-2C-methyl-D-erythritol. This is 4-diphosphocytidyl-2-C-methyl-D-erythritol kinase from Leptospira biflexa serovar Patoc (strain Patoc 1 / ATCC 23582 / Paris).